The following is a 374-amino-acid chain: 4-hydroxy-3-methylbut-2-en-1-yl diphosphate synthase (flavodoxin) (374 aa).

4 residues coordinate [4Fe-4S] cluster: cysteine 270, cysteine 273, cysteine 305, and glutamate 312.

Belongs to the IspG family. [4Fe-4S] cluster is required as a cofactor.

The catalysed reaction is (2E)-4-hydroxy-3-methylbut-2-enyl diphosphate + oxidized [flavodoxin] + H2O + 2 H(+) = 2-C-methyl-D-erythritol 2,4-cyclic diphosphate + reduced [flavodoxin]. The protein operates within isoprenoid biosynthesis; isopentenyl diphosphate biosynthesis via DXP pathway; isopentenyl diphosphate from 1-deoxy-D-xylulose 5-phosphate: step 5/6. Converts 2C-methyl-D-erythritol 2,4-cyclodiphosphate (ME-2,4cPP) into 1-hydroxy-2-methyl-2-(E)-butenyl 4-diphosphate. The polypeptide is 4-hydroxy-3-methylbut-2-en-1-yl diphosphate synthase (flavodoxin) (Yersinia enterocolitica serotype O:8 / biotype 1B (strain NCTC 13174 / 8081)).